A 279-amino-acid chain; its full sequence is Oxygen-dependent coproporphyrinogen-III oxidase (279 aa).

Serine 102 provides a ligand contact to substrate. A divalent metal cation-binding residues include histidine 106 and histidine 116. The Proton donor role is filled by histidine 116. 118 to 120 (NTR) is a binding site for substrate. The a divalent metal cation site is built by histidine 149 and histidine 179. The tract at residues 244–279 (YVEFNLLYDRGTKFGLMTDGNVEAILMSLPPEVKFN) is important for dimerization.

Belongs to the aerobic coproporphyrinogen-III oxidase family. In terms of assembly, homodimer. The cofactor is a divalent metal cation.

The protein localises to the cytoplasm. The catalysed reaction is coproporphyrinogen III + O2 + 2 H(+) = protoporphyrinogen IX + 2 CO2 + 2 H2O. The protein operates within porphyrin-containing compound metabolism; protoporphyrin-IX biosynthesis; protoporphyrinogen-IX from coproporphyrinogen-III (O2 route): step 1/1. Functionally, involved in the heme biosynthesis. Catalyzes the aerobic oxidative decarboxylation of propionate groups of rings A and B of coproporphyrinogen-III to yield the vinyl groups in protoporphyrinogen-IX. The protein is Oxygen-dependent coproporphyrinogen-III oxidase of Rickettsia rickettsii (strain Iowa).